We begin with the raw amino-acid sequence, 134 residues long: MPPKARTNARRTGRRVVKKNVANGNAYIKSTFNNTIVSITDTNGAVISWASSGHVGFKGSRKSTPFAAQMAAENAARKAMDHGMKKVDVFVKGPGSGRETAIRSLQAAGLEIGSISDVTPQPHNGCRPPKRRRV.

This sequence belongs to the universal ribosomal protein uS11 family. As to quaternary structure, part of the 30S ribosomal subunit. Interacts with proteins S7 and S18. Binds to IF-3.

Its function is as follows. Located on the platform of the 30S subunit, it bridges several disparate RNA helices of the 16S rRNA. Forms part of the Shine-Dalgarno cleft in the 70S ribosome. The chain is Small ribosomal subunit protein uS11 from Corynebacterium glutamicum (strain R).